Reading from the N-terminus, the 858-residue chain is Receptor-like protein kinase ANXUR2 (858 aa).

Residues 1–27 (MNEKLRILFSFLCFFYVLLVSPSQSNG) form the signal peptide. At 28–431 (QDISLSCGAS…VKKDFQGDKR (404 aa)) the chain is on the extracellular side. Residues asparagine 133, asparagine 293, asparagine 303, and asparagine 331 are each glycosylated (N-linked (GlcNAc...) asparagine). The chain crosses the membrane as a helical span at residues 432 to 452 (ITAFVIGSAGGVAAVLFCALC). The Cytoplasmic portion of the chain corresponds to 453 to 858 (FTMYQRKRKF…FSQIVNPKGR (406 aa)). Residues 521–794 (FDESNVIGVG…GDVLWNLEFA (274 aa)) form the Protein kinase domain. ATP contacts are provided by residues 527-535 (IGVGGFGKV) and lysine 549. Aspartate 645 acts as the Proton acceptor in catalysis. The interval 800–858 (TADGSRHRTPSNGGGSVDLGGGGGGVTVNISAGESDLGDDLSSEENSGIFSQIVNPKGR) is disordered. The segment covering 811 to 825 (NGGGSVDLGGGGGGV) has biased composition (gly residues). Polar residues predominate over residues 843–858 (EENSGIFSQIVNPKGR).

It belongs to the protein kinase superfamily. Ser/Thr protein kinase family. In terms of tissue distribution, expressed in pollen, but not in pistils or seedlings.

It localises to the cell membrane. It catalyses the reaction L-seryl-[protein] + ATP = O-phospho-L-seryl-[protein] + ADP + H(+). The catalysed reaction is L-threonyl-[protein] + ATP = O-phospho-L-threonyl-[protein] + ADP + H(+). Its function is as follows. Receptor-like protein kinase that controls pollen tube behavior by directing rupture at proper timing to release the sperm cell. In Arabidopsis thaliana (Mouse-ear cress), this protein is Receptor-like protein kinase ANXUR2 (ANX2).